The following is a 194-amino-acid chain: Peptidyl-tRNA hydrolase (194 aa).

Position 17 (Y17) interacts with tRNA. The active-site Proton acceptor is the H22. TRNA-binding residues include Y68, N70, and N116.

This sequence belongs to the PTH family. Monomer.

Its subcellular location is the cytoplasm. It catalyses the reaction an N-acyl-L-alpha-aminoacyl-tRNA + H2O = an N-acyl-L-amino acid + a tRNA + H(+). Its function is as follows. Hydrolyzes ribosome-free peptidyl-tRNAs (with 1 or more amino acids incorporated), which drop off the ribosome during protein synthesis, or as a result of ribosome stalling. Functionally, catalyzes the release of premature peptidyl moieties from peptidyl-tRNA molecules trapped in stalled 50S ribosomal subunits, and thus maintains levels of free tRNAs and 50S ribosomes. The polypeptide is Peptidyl-tRNA hydrolase (Pseudomonas syringae pv. tomato (strain ATCC BAA-871 / DC3000)).